Consider the following 213-residue polypeptide: NADH-quinone oxidoreductase subunit B 1 (213 aa).

4 residues coordinate [4Fe-4S] cluster: Cys-82, Cys-83, Cys-148, and Cys-177.

The protein belongs to the complex I 20 kDa subunit family. As to quaternary structure, NDH-1 is composed of 14 different subunits. Subunits NuoB, C, D, E, F, and G constitute the peripheral sector of the complex. Requires [4Fe-4S] cluster as cofactor.

It localises to the cell inner membrane. The catalysed reaction is a quinone + NADH + 5 H(+)(in) = a quinol + NAD(+) + 4 H(+)(out). Its function is as follows. NDH-1 shuttles electrons from NADH, via FMN and iron-sulfur (Fe-S) centers, to quinones in the respiratory chain. The immediate electron acceptor for the enzyme in this species is believed to be ubiquinone. Couples the redox reaction to proton translocation (for every two electrons transferred, four hydrogen ions are translocated across the cytoplasmic membrane), and thus conserves the redox energy in a proton gradient. This is NADH-quinone oxidoreductase subunit B 1 from Koribacter versatilis (strain Ellin345).